Reading from the N-terminus, the 230-residue chain is Protein FAM3A (230 aa).

Residues 1–33 (MRLAGPLRIVVLVVSVGVTWIVVSILLGGPGSG) form the signal peptide. Intrachain disulfides connect cysteine 59–cysteine 87 and cysteine 65–cysteine 222. Positions 68–226 (EHLAFRVVSG…LEMEGCIPRR (159 aa)) constitute a GG-type lectin domain.

The protein belongs to the FAM3 family. As to expression, in similar amounts in testis, pancreas, adrenal, placenta, brain, fetal brain, liver, kidney, skeletal muscle and heart.

The protein resides in the secreted. In terms of biological role, may act as a defensin against invading fungal microorganisms. The polypeptide is Protein FAM3A (FAM3A) (Homo sapiens (Human)).